The chain runs to 1129 residues: Tyrosine-protein kinase JAK2 (1129 aa).

The 344-residue stretch at 35-378 (PLLQVYLYYS…GYYRLTADAH (344 aa)) folds into the FERM domain. A Phosphotyrosine; by autocatalysis modification is found at Y117. The 82-residue stretch at 399–480 (HGPIFMDFAI…NLKDLLTCYQ (82 aa)) folds into the SH2; atypical domain. Protein kinase domains are found at residues 542 to 806 (LIFE…NSLF) and 846 to 1118 (LKFL…DLAQ). An ATP-binding site is contributed by 852 to 860 (LGKGNFGSV). Y865 carries the phosphotyrosine; by autocatalysis modification. Position 879 (K879) interacts with ATP. Y963 and Y969 each carry phosphotyrosine; by autocatalysis. The active-site Proton acceptor is the D973. Residues Y1004 and Y1005 each carry the phosphotyrosine; by autocatalysis modification.

It belongs to the protein kinase superfamily. Tyr protein kinase family. JAK subfamily. Autophosphorylated, leading to regulate its activity.

It localises to the endomembrane system. The protein localises to the nucleus. It carries out the reaction L-tyrosyl-[protein] + ATP = O-phospho-L-tyrosyl-[protein] + ADP + H(+). With respect to regulation, regulated by autophosphorylation, can both activate or decrease activity. Heme regulates its activity by enhancing the phosphorylation on Tyr-1004 and Tyr-1005. In terms of biological role, non-receptor tyrosine kinase involved in various processes such as cell growth, development, differentiation or histone modifications. Mediates essential signaling events in both innate and adaptive immunity. In the cytoplasm, plays a pivotal role in signal transduction via its association with cytokine receptors. Following ligand-binding to cell surface receptors, phosphorylates specific tyrosine residues on the cytoplasmic tails of the receptor, creating docking sites for STATs proteins. Subsequently, phosphorylates the STATs proteins once they are recruited to the receptor. Phosphorylated STATs then form homodimer or heterodimers and translocate to the nucleus to activate gene transcription. For example, cell stimulation with erythropoietin (EPO) during erythropoiesis leads to JAK2 autophosphorylation, activation, and its association with erythropoietin receptor (EPOR) that becomes phosphorylated in its cytoplasmic domain. Then, STAT5 (STAT5A or STAT5B) is recruited, phosphorylated and activated by JAK2. Once activated, dimerized STAT5 translocates into the nucleus and promotes the transcription of several essential genes involved in the modulation of erythropoiesis. Part of a signaling cascade that is activated by increased cellular retinol and that leads to the activation of STAT5 (STAT5A or STAT5B). In the nucleus, plays a key role in chromatin by specifically mediating phosphorylation of 'Tyr-41' of histone H3 (H3Y41ph), a specific tag that promotes exclusion of CBX5 (HP1 alpha) from chromatin. Up-regulates the potassium voltage-gated channel activity of KCNA3. The sequence is that of Tyrosine-protein kinase JAK2 from Gallus gallus (Chicken).